We begin with the raw amino-acid sequence, 258 residues long: Type II restriction enzyme HincII (258 aa).

It carries out the reaction Endonucleolytic cleavage of DNA to give specific double-stranded fragments with terminal 5'-phosphates.. A P subtype restriction enzyme that recognizes the double-stranded sequence 5'-GTYRAC-3' and cleaves after Y-3. The polypeptide is Type II restriction enzyme HincII (hincIIR) (Haemophilus influenzae).